The chain runs to 413 residues: 4-hydroxy-3-methylbut-2-en-1-yl diphosphate synthase (flavodoxin) (413 aa).

Residues Cys-305, Cys-308, Cys-351, and Glu-358 each coordinate [4Fe-4S] cluster.

It belongs to the IspG family. [4Fe-4S] cluster is required as a cofactor.

It carries out the reaction (2E)-4-hydroxy-3-methylbut-2-enyl diphosphate + oxidized [flavodoxin] + H2O + 2 H(+) = 2-C-methyl-D-erythritol 2,4-cyclic diphosphate + reduced [flavodoxin]. It participates in isoprenoid biosynthesis; isopentenyl diphosphate biosynthesis via DXP pathway; isopentenyl diphosphate from 1-deoxy-D-xylulose 5-phosphate: step 5/6. Its function is as follows. Converts 2C-methyl-D-erythritol 2,4-cyclodiphosphate (ME-2,4cPP) into 1-hydroxy-2-methyl-2-(E)-butenyl 4-diphosphate. This is 4-hydroxy-3-methylbut-2-en-1-yl diphosphate synthase (flavodoxin) from Bartonella tribocorum (strain CIP 105476 / IBS 506).